A 303-amino-acid chain; its full sequence is Methionyl-tRNA formyltransferase (303 aa).

108 to 111 provides a ligand contact to (6S)-5,6,7,8-tetrahydrofolate; sequence SDLP.

It belongs to the Fmt family.

It carries out the reaction L-methionyl-tRNA(fMet) + (6R)-10-formyltetrahydrofolate = N-formyl-L-methionyl-tRNA(fMet) + (6S)-5,6,7,8-tetrahydrofolate + H(+). In terms of biological role, attaches a formyl group to the free amino group of methionyl-tRNA(fMet). The formyl group appears to play a dual role in the initiator identity of N-formylmethionyl-tRNA by promoting its recognition by IF2 and preventing the misappropriation of this tRNA by the elongation apparatus. In Rickettsia typhi (strain ATCC VR-144 / Wilmington), this protein is Methionyl-tRNA formyltransferase.